A 280-amino-acid chain; its full sequence is MKYSLCTISFRHQLISFTDIVQFAYENGFEGIELWGTHAQNLYMQEYETTERELNCLKDKTLEITMISDYLDISLSADFEKTIEKCEQLAILANWFKTNKIRTFAGQKGSADFSQQERQEYVNRIRMICELFAQHNMYVLLETHPNTLTDTLPSTLELLGEVDHPNLKINLDFLHIWESGADPVDSFQQLRPWIQHYHFKNISSADYLHVFEPNNVYAAAGNRTGMVPLFEGIVNYDEIIQEVRDTDHFASLEWFGHNAKDILKAEMKVLTNRNLEVVTS.

Tyr-70, Arg-102, and Glu-142 together coordinate substrate. Glu-142 contributes to the Mn(2+) binding site. His-144 (proton acceptor) is an active-site residue. Residues Asp-172 and His-175 each coordinate substrate. Asp-172 is a binding site for Mn(2+). Residue His-198 coordinates Mn(2+). Positions 217 and 253 each coordinate substrate. Mn(2+) is bound at residue Glu-253.

Homodimer. It depends on Mn(2+) as a cofactor.

The catalysed reaction is 3-dehydroshikimate = 3,4-dihydroxybenzoate + H2O. The protein operates within aromatic compound metabolism; 3,4-dihydroxybenzoate biosynthesis; 3,4-dihydroxybenzoate from 3-dehydroquinate: step 2/2. It participates in siderophore biosynthesis; petrobactin biosynthesis. Its function is as follows. Involved in the biosynthesis of petrobactin, a catecholate siderophore that functions in both iron acquisition and virulence. Catalyzes the conversion of 3-dehydroshikimate to 3,4-dihydroxybenzoate (3,4-DHBA). The polypeptide is 3-dehydroshikimate dehydratase (Bacillus anthracis).